We begin with the raw amino-acid sequence, 436 residues long: MAVNLSRNGPALQEAYVRVVTEKSPTDWALFTYEGNSNDIRVAGTGEGGLEELVEELNSGKVMYAFCRVKDPNSGLPKFVLINWTGEGVNDVRKGACANHVSTMANFLKGAHVTINARAEEDVEPECIMEKVAKASGANYSFHKESSCFQDVGPQAPVGSVYQKTNAVSEIKRVGKDNFWAKAEKEEENRRLEEKRRAEEEKQRLEEERRERELQEAARREQRYQEQHRSAGPPSPSSRTGELEQEVVSRSRQEWESAGQQAPHPREIFKQKERAMSTTSVSSSQPGKLRSPFLQKQFTQPEASYGREPTSPVSRPAAGVCEELAPSTPPSAQTDDEPTYEVPSEQETLYEEPPPVQQPGAGSGHIDNYMQSQDLSGQGLCARALYDYQAADDTEISFDPENLITGIEVIDEGWWRGYGPDGHFGMFPANYVELIE.

One can recognise an ADF-H domain in the interval 2-133; it reads AVNLSRNGPA…EPECIMEKVA (132 aa). A Phosphothreonine modification is found at Thr26. Ser160 carries the post-translational modification Phosphoserine. At Lys176 the chain carries N6-acetyllysine. The stretch at 178-232 forms a coiled coil; that stretch reads NFWAKAEKEEENRRLEEKRRAEEEKQRLEEERRERELQEAARREQRYQEQHRSAG. Composition is skewed to basic and acidic residues over residues 185-229 and 264-275; these read KEEE…EQHR and HPREIFKQKERA. A disordered region spans residues 185-371; it reads KEEENRRLEE…GSGHIDNYMQ (187 aa). A compositionally biased stretch (polar residues) spans 276 to 286; it reads MSTTSVSSSQP. Ser277, Ser280, Ser283, and Ser291 each carry phosphoserine. Lys296 carries the post-translational modification N6-acetyllysine. Thr299 carries the phosphothreonine modification. Phosphoserine is present on Ser311. Residues Tyr340 and Tyr350 each carry the phosphotyrosine modification. One can recognise an SH3 domain in the interval 377-436; the sequence is GQGLCARALYDYQAADDTEISFDPENLITGIEVIDEGWWRGYGPDGHFGMFPANYVELIE.

Belongs to the ABP1 family. In terms of assembly, interacts with FGD1, MAP4K1 and PRAM1. Interacts with ANKRD54. Interacts with WASL and WIPF1. Interacts with SHANK2 and SHANK3. Interacts with both COBL and PACSIN1. Interacts with DNM1 and SYN1. In terms of tissue distribution, detected in brain (at protein level). Widely expressed in brain with highest levels in hippocampus and cerebral cortex. Located primarily in dendrites and, in moderate amounts, in cell bodies. Isoform 1 and isoform 3 are the predominant isoforms in brain.

It localises to the cytoplasm. The protein localises to the cytoskeleton. It is found in the cell projection. The protein resides in the lamellipodium. Its subcellular location is the ruffle. It localises to the cell cortex. The protein localises to the cytosol. It is found in the cell membrane. The protein resides in the synapse. Its subcellular location is the perikaryon. It localises to the neuron projection. The protein localises to the dendrite. It is found in the postsynaptic density. The protein resides in the golgi apparatus membrane. Its subcellular location is the cytoplasmic vesicle. It localises to the clathrin-coated vesicle membrane. The protein localises to the podosome. It is found in the early endosome. In terms of biological role, adapter protein that binds F-actin and DNM1, and thereby plays a role in receptor-mediated endocytosis. Required for the formation of organized podosome rosettes. May act as a common effector of antigen receptor-signaling pathways in leukocytes. Acts as a key component of the immunological synapse that regulates T-cell activation by bridging TCRs and the actin cytoskeleton to gene activation and endocytic processes. Plays a role in the reorganization of the actin cytoskeleton, formation of cell projections, such as neurites, in neuron morphogenesis and synapse formation via its interaction with WASL and COBL. Does not bind G-actin and promote actin polymerization by itself. The sequence is that of Drebrin-like protein from Rattus norvegicus (Rat).